A 1358-amino-acid polypeptide reads, in one-letter code: DNA mismatch repair protein Msh6 (1358 aa).

The disordered stretch occupies residues 1-87; sequence MSRQSTLYSF…SSAQAVPPSS (87 aa). Residues serine 14, serine 38, and serine 40 each carry the phosphoserine modification. Residues 25–46 show a composition bias toward low complexity; sequence AEASRQGAAASGASASRGGDAA. Lysine 67 is subject to N6-acetyllysine. The span at 76–87 shows a compositional bias: low complexity; it reads ASSSAQAVPPSS. 5 positions are modified to phosphoserine: serine 91, serine 137, serine 200, serine 219, and serine 227. Residues 92-154 form the PWWP domain; the sequence is PGDLVWAKME…KRMLKPYTGS (63 aa). Positions 197-360 are disordered; it reads DEPSEPEEEE…VSGGGNDSSG (164 aa). Acidic residues-rich tracts occupy residues 198–209 and 219–231; these read EPSEPEEEEETE and SEEDNYNESEEEA. Basic residues predominate over residues 240-249; that stretch reads RSSRQVKKRR. A phosphoserine mark is found at serine 252, serine 254, serine 256, and serine 261. Positions 263–273 are enriched in basic and acidic residues; it reads VEFKPDTKQEG. A Phosphothreonine modification is found at threonine 269. Residues serine 274, serine 275, serine 279, and serine 280 each carry the phosphoserine modification. Residues 329-351 show a composition bias toward polar residues; the sequence is LSETKSTLSAFSAPQNSESQTHV. Threonine 487 carries the phosphothreonine modification. An N6-acetyllysine modification is found at lysine 503. Serine 827 and serine 932 each carry phosphoserine. Threonine 1007 is subject to Phosphothreonine. 1132 to 1139 contributes to the ATP binding site; that stretch reads GPNMGGKS.

This sequence belongs to the DNA mismatch repair MutS family. As to quaternary structure, component of the DNA mismatch repair (MMR) complex composed at least of MSH2, MSH3, MSH6, PMS1 and MLH1. Heterodimer consisting of MSH2-MSH6 (MutS alpha). Forms a ternary complex with MutL alpha (MLH1-PMS1). Interacts with MCM9. Part of the BRCA1-associated genome surveillance complex (BASC), which contains BRCA1, MSH2, MSH6, MLH1, ATM, BLM, PMS2 and the RAD50-MRE11-NBS1 protein complex. This association could be a dynamic process changing throughout the cell cycle and within subnuclear domains. Post-translationally, phosphorylated by PRKCZ, which may prevent MutS alpha degradation by the ubiquitin-proteasome pathway.

The protein localises to the nucleus. The protein resides in the chromosome. Its function is as follows. Component of the post-replicative DNA mismatch repair system (MMR). Heterodimerizes with MSH2 to form MutS alpha, which binds to DNA mismatches thereby initiating DNA repair. When bound, MutS alpha bends the DNA helix and shields approximately 20 base pairs, and recognizes single base mismatches and dinucleotide insertion-deletion loops (IDL) in the DNA. After mismatch binding, forms a ternary complex with the MutL alpha heterodimer, which is thought to be responsible for directing the downstream MMR events, including strand discrimination, excision, and resynthesis. ATP binding and hydrolysis play a pivotal role in mismatch repair functions. The ATPase activity associated with MutS alpha regulates binding similar to a molecular switch: mismatched DNA provokes ADP--&gt;ATP exchange, resulting in a discernible conformational transition that converts MutS alpha into a sliding clamp capable of hydrolysis-independent diffusion along the DNA backbone. This transition is crucial for mismatch repair. MutS alpha may also play a role in DNA homologous recombination repair. Recruited on chromatin in G1 and early S phase via its PWWP domain that specifically binds trimethylated 'Lys-36' of histone H3 (H3K36me3): early recruitment to chromatin to be replicated allowing a quick identification of mismatch repair to initiate the DNA mismatch repair reaction. The protein is DNA mismatch repair protein Msh6 of Mus musculus (Mouse).